We begin with the raw amino-acid sequence, 422 residues long: MAKTIQAIRGMNDCLPTQSPLWQKLENTVKNVISAYGYNEVRMPIVEETNLFSRAVGEETDVVSKEMYTFDDRNGDSLTLRPEGTAGCVRSCIQNSLINRDEQRLWYMGPMFRHERPQKGRYRQFHQCGVEVFGLNGPDVDAELIMMTARLWRELGIDKHVRLELNSIGSQEDRADYRTALVAFLEQHIDVLDEDCKRRMHTNPLRVLDTKNPDIQAILGDAPRLSEYLGEESKAHFAGLCELLDAAGIEYTVNERLVRGLDYYNRTVFEWITESLGAQGTVCGGGRYDGLVEQLGGKPTPAVGFAMGLERLVLMLETLELTDVRRSVDVYVVTAGEGTMMAGMKLAEQLREAISGVRVMNHFGGGNFKKQFKRADKVGAVVALVLGENEVADNTVVLKDLVGGEQETYNQAEVAEKIAALI.

It belongs to the class-II aminoacyl-tRNA synthetase family. In terms of assembly, homodimer.

The protein localises to the cytoplasm. The catalysed reaction is tRNA(His) + L-histidine + ATP = L-histidyl-tRNA(His) + AMP + diphosphate + H(+). This is Histidine--tRNA ligase from Vibrio parahaemolyticus serotype O3:K6 (strain RIMD 2210633).